A 232-amino-acid chain; its full sequence is Ubiquinone biosynthesis O-methyltransferase (232 aa).

4 residues coordinate S-adenosyl-L-methionine: Arg-36, Gly-55, Asp-76, and Leu-120.

This sequence belongs to the methyltransferase superfamily. UbiG/COQ3 family.

It carries out the reaction a 3-demethylubiquinol + S-adenosyl-L-methionine = a ubiquinol + S-adenosyl-L-homocysteine + H(+). It catalyses the reaction a 3-(all-trans-polyprenyl)benzene-1,2-diol + S-adenosyl-L-methionine = a 2-methoxy-6-(all-trans-polyprenyl)phenol + S-adenosyl-L-homocysteine + H(+). The protein operates within cofactor biosynthesis; ubiquinone biosynthesis. O-methyltransferase that catalyzes the 2 O-methylation steps in the ubiquinone biosynthetic pathway. This is Ubiquinone biosynthesis O-methyltransferase from Azotobacter vinelandii (strain DJ / ATCC BAA-1303).